The primary structure comprises 156 residues: Endoribonuclease YbeY (156 aa).

Residues His122, His126, and His132 each contribute to the Zn(2+) site.

This sequence belongs to the endoribonuclease YbeY family. The cofactor is Zn(2+).

It is found in the cytoplasm. Functionally, single strand-specific metallo-endoribonuclease involved in late-stage 70S ribosome quality control and in maturation of the 3' terminus of the 16S rRNA. This Pediococcus pentosaceus (strain ATCC 25745 / CCUG 21536 / LMG 10740 / 183-1w) protein is Endoribonuclease YbeY.